The following is a 338-amino-acid chain: Dihydroorotate dehydrogenase (quinone) (338 aa).

FMN contacts are provided by residues 59 to 63 (AGLDK) and Thr-83. Lys-63 contributes to the substrate binding site. 108-112 (NRMGF) contributes to the substrate binding site. FMN contacts are provided by Asn-136 and Asn-169. Substrate is bound at residue Asn-169. Ser-172 acts as the Nucleophile in catalysis. Substrate is bound at residue Asn-174. FMN is bound by residues Lys-214 and Thr-242. Substrate is bound at residue 243-244 (NT). FMN-binding positions include Gly-265, Gly-294, and 315–316 (YS).

Belongs to the dihydroorotate dehydrogenase family. Type 2 subfamily. As to quaternary structure, monomer. Requires FMN as cofactor.

It localises to the cell membrane. The enzyme catalyses (S)-dihydroorotate + a quinone = orotate + a quinol. The protein operates within pyrimidine metabolism; UMP biosynthesis via de novo pathway; orotate from (S)-dihydroorotate (quinone route): step 1/1. Functionally, catalyzes the conversion of dihydroorotate to orotate with quinone as electron acceptor. The chain is Dihydroorotate dehydrogenase (quinone) from Azoarcus sp. (strain BH72).